Reading from the N-terminus, the 803-residue chain is Sensor histidine kinase CheAY (803 aa).

Residue H47 is modified to Phosphohistidine. 2 disordered regions span residues 134–185 (LESA…DEPD) and 209–255 (EADK…ENKA). 3 stretches are compositionally biased toward basic and acidic residues: residues 136 to 166 (SAKERTTEAPQKENKEETKEEAKEENKENKA), 209 to 226 (EADKERRAQKKQEAKPKQ), and 233 to 254 (ETPKAPKTETKAKAKADTEENK). The Histidine kinase domain maps to 270 to 517 (RLDHLMNLIG…TQKLKIPLTL (248 aa)). H273 is subject to Phosphohistidine; by autocatalysis. Residues 519–653 (IIQALLVGVQ…VGAMMDMAKS (135 aa)) form the CheW-like domain. In terms of domain architecture, Response regulatory spans 678-796 (IVLAIDDSST…YLTTVVKRSI (119 aa)). D729 carries the post-translational modification 4-aspartylphosphate.

Post-translationally, autophosphorylated.

It carries out the reaction ATP + protein L-histidine = ADP + protein N-phospho-L-histidine.. Its function is as follows. Member of the two-component regulatory system CheAY/CheY that regulates chemotaxis and colonization of the gastric mucosa. Functions as a sensor protein kinase which is autophosphorylated at a histidine residue and transfers its phosphate group to the conserved aspartic acid residue in the regulatory domain of CheY. In turn, phosphorylated CheY (CheY-P) interacts with the flagellar motor protein FliM to cause clockwise flagellar rotation and bacterial reversals, as opposed to straight swimming when CheY is not phosphorylated. This Helicobacter pylori (strain ATCC 700392 / 26695) (Campylobacter pylori) protein is Sensor histidine kinase CheAY (cheAY).